The sequence spans 209 residues: Large ribosomal subunit protein bL25 (209 aa).

Positions 190–209 are disordered; sequence GLKSADDEAEGEDAEEAAAE. The span at 196-209 shows a compositional bias: acidic residues; it reads DEAEGEDAEEAAAE.

Belongs to the bacterial ribosomal protein bL25 family. CTC subfamily. Part of the 50S ribosomal subunit; part of the 5S rRNA/L5/L18/L25 subcomplex. Contacts the 5S rRNA. Binds to the 5S rRNA independently of L5 and L18.

This is one of the proteins that binds to the 5S RNA in the ribosome where it forms part of the central protuberance. This Ruegeria sp. (strain TM1040) (Silicibacter sp.) protein is Large ribosomal subunit protein bL25.